We begin with the raw amino-acid sequence, 245 residues long: 1-(5-phosphoribosyl)-5-[(5-phosphoribosylamino)methylideneamino] imidazole-4-carboxamide isomerase (245 aa).

The active-site Proton acceptor is the Asp-12. Asp-131 functions as the Proton donor in the catalytic mechanism.

It belongs to the HisA/HisF family.

It localises to the cytoplasm. The catalysed reaction is 1-(5-phospho-beta-D-ribosyl)-5-[(5-phospho-beta-D-ribosylamino)methylideneamino]imidazole-4-carboxamide = 5-[(5-phospho-1-deoxy-D-ribulos-1-ylimino)methylamino]-1-(5-phospho-beta-D-ribosyl)imidazole-4-carboxamide. It participates in amino-acid biosynthesis; L-histidine biosynthesis; L-histidine from 5-phospho-alpha-D-ribose 1-diphosphate: step 4/9. The polypeptide is 1-(5-phosphoribosyl)-5-[(5-phosphoribosylamino)methylideneamino] imidazole-4-carboxamide isomerase (Thermobifida fusca (strain YX)).